The following is a 32-amino-acid chain: Delta-conotoxin-like CnVIB (32 aa).

3 disulfide bridges follow: Cys3/Cys18, Cys10/Cys22, and Cys17/Cys27. Pro6 and Pro14 each carry 4-hydroxyproline.

This sequence belongs to the conotoxin O1 superfamily. Expressed by the venom duct.

The protein resides in the secreted. In terms of biological role, delta-conotoxins bind to site 6 of voltage-gated sodium channels (Nav) and inhibit the inactivation process. This toxin acts on Nav1.4/SCN4A and Nav1.6/SCN8A (EC(50)=2.3 uM). The polypeptide is Delta-conotoxin-like CnVIB (Conus consors (Singed cone)).